A 134-amino-acid polypeptide reads, in one-letter code: Small ribosomal subunit protein uS11 (134 aa).

Disordered stretches follow at residues 1–24 (MPPKSRAGAVKKVRRKEKKNVAHG) and 115–134 (IQDVTPQPHNGCRPPKRRRV). Basic residues predominate over residues 9–18 (AVKKVRRKEK).

The protein belongs to the universal ribosomal protein uS11 family. In terms of assembly, part of the 30S ribosomal subunit. Interacts with proteins S7 and S18. Binds to IF-3.

In terms of biological role, located on the platform of the 30S subunit, it bridges several disparate RNA helices of the 16S rRNA. Forms part of the Shine-Dalgarno cleft in the 70S ribosome. The sequence is that of Small ribosomal subunit protein uS11 from Saccharopolyspora erythraea (strain ATCC 11635 / DSM 40517 / JCM 4748 / NBRC 13426 / NCIMB 8594 / NRRL 2338).